Reading from the N-terminus, the 856-residue chain is V-type proton ATPase 116 kDa subunit a 2 (856 aa).

Over 1-393 the chain is Cytoplasmic; it reads MGSLFRSESM…DAYGVGSYRE (393 aa). The helical transmembrane segment at 394–412 threads the bilayer; that stretch reads VNPALFTIITFPFLFAVMF. At 413–414 the chain is on the vacuolar side; that stretch reads GD. A helical membrane pass occupies residues 415–431; sequence FGHGFVMFLFALLLVLN. The Cytoplasmic segment spans residues 432-445; sequence ENHPRLSQSQEILR. A helical membrane pass occupies residues 446–475; it reads MFFDGRYILLLMGLFSVYTGLIYNDCFSKS. At 476–549 the chain is on the vacuolar side; that stretch reads VNLFGSGWNV…ATNRLTFLNS (74 aa). A helical membrane pass occupies residues 550-569; that stretch reads FKMKMSVILGIFHMTFGVVL. Residues 570 to 587 are Cytoplasmic-facing; the sequence is GIFNHLHFRKKFNVYLVS. A helical membrane pass occupies residues 588–608; the sequence is VPEILFMLCIFGYLIFMIIYK. The Vacuolar portion of the chain corresponds to 609 to 651; that stretch reads WLAYSAETSREAPSILIEFINMFLFPTSKTHGLYPGQAHVQRV. A helical transmembrane segment spans residues 652-671; sequence LVALTVLAVPVLFLGKPLFL. Residues 672 to 739 lie on the Cytoplasmic side of the membrane; sequence LWLHNGRNCF…EILMTQAIHS (68 aa). Phosphoserine occurs at positions 695 and 700. Residues 740–764 form a helical membrane-spanning segment; sequence IEYCLGCISNTASYLRLWALSLAHA. Residues 765–785 are Vacuolar-facing; it reads QLSDVLWAMLMRVGLRVDTTY. The helical transmembrane segment at 786 to 824 threads the bilayer; sequence GVLLLLPVMAFFAVLTIFILLVMEGLSAFLHAIRLHWVE. Topologically, residues 825 to 856 are cytoplasmic; the sequence is FQNKFYVGAGTKFVPFSFSLLSSKFSNDDSIA.

The protein belongs to the V-ATPase 116 kDa subunit family. V-ATPase is a heteromultimeric enzyme made up of two complexes: the ATP-hydrolytic V1 complex and the proton translocation V0 complex. The V1 complex consists of three catalytic AB heterodimers that form a heterohexamer, three peripheral stalks each consisting of EG heterodimers, one central rotor including subunits D and F, and the regulatory subunits C and H. The proton translocation complex V0 consists of the proton transport subunit a, a ring of proteolipid subunits c9c'', rotary subunit d, subunits e and f, and the accessory subunits ATP6AP1/Ac45 and ATP6AP2/PRR. Directly interacts with PSCD2 through its N-terminal cytosolic tail in an intra-endosomal acidification-dependent manner. Disruption of this interaction results in the inhibition of endocytosis. Interacts with SPAAR. As to expression, relatively high expression in kidney and liver. Lower levels in the spleen, testis, and skeletal muscle. Also expressed in the thymus.

Its subcellular location is the cell membrane. It localises to the endosome membrane. Functionally, subunit of the V0 complex of vacuolar(H+)-ATPase (V-ATPase), a multisubunit enzyme composed of a peripheral complex (V1) that hydrolyzes ATP and a membrane integral complex (V0) that translocates protons. V-ATPase is responsible for acidifying and maintaining the pH of intracellular compartments and in some cell types, is targeted to the plasma membrane, where it is responsible for acidifying the extracellular environment. Essential component of the endosomal pH-sensing machinery. May play a role in maintaining the Golgi functions, such as glycosylation maturation, by controlling the Golgi pH. In aerobic conditions, involved in intracellular iron homeostasis, thus triggering the activity of Fe(2+) prolyl hydroxylase (PHD) enzymes, and leading to HIF1A hydroxylation and subsequent proteasomal degradation. This chain is V-type proton ATPase 116 kDa subunit a 2 (Atp6v0a2), found in Mus musculus (Mouse).